A 607-amino-acid polypeptide reads, in one-letter code: Synaptotagmin-like protein 3 (607 aa).

Residues 4–123 (EVDLESFKEL…IKTGEWFFEE (120 aa)) enclose the RabBD domain. Positions 221–279 (VGHTERRSQSDTAVNVTSRKASTPDILKAFHQEDPKHPPDPVLKQDTPPSSPTHSAVFS) are disordered. Over residues 230-241 (SDTAVNVTSRKA) the composition is skewed to polar residues. The segment covering 248-259 (KAFHQEDPKHPP) has biased composition (basic and acidic residues). 2 C2 domains span residues 305-430 (VTGE…ARWY) and 458-590 (LPAG…LQWH).

In terms of assembly, monomer. Binds NRXN1. Binds RAB27A that has been activated by GTP-binding via its N-terminus. Highly expressed in spleen and lung. Detected at lower levels in heart and testis.

The protein localises to the endomembrane system. May act as Rab effector protein and play a role in vesicle trafficking. Binds phospholipids in the presence of calcium ions. The chain is Synaptotagmin-like protein 3 (Sytl3) from Mus musculus (Mouse).